A 636-amino-acid polypeptide reads, in one-letter code: Rik1-associated factor 2 (636 aa).

In terms of assembly, component of the Clr4 methyltransferase complex (ClrC) composed of at least clr4, rik1, pcu4, rbx1, raf1 and raf2. The cullin pcu4, rik1, raf1, raf2 and the ring-box protein rbx1 are components of an E3 ubiquitin ligase, whose activity is essential for heterochromatin assembly. Interacts with pcu4.

It localises to the cytoplasm. The protein resides in the mitochondrion. The protein localises to the nucleus. Its subcellular location is the chromosome. In terms of biological role, component of the Clr4 methyltransferase complex (ClrC) which contributes to the establishment of heterochromatin by specifically methylating histone H3 to form H3K9me. ClrC preferentially ubiquitylates H3K14 and ClrC-mediated H3 ubiquitination promotes clr4 methyltransferase activity for the methylation of H3K9. H3K9me represents a specific tag for epigenetic transcriptional repression by recruiting swi6/HP1 to methylated histones which leads to transcriptional silencing within centromeric heterochromatin, telomeric regions and at the silent mating-type loci. Has a role in both mitotic and meiotic chromosome segregation. The sequence is that of Rik1-associated factor 2 (raf2) from Schizosaccharomyces pombe (strain 972 / ATCC 24843) (Fission yeast).